A 278-amino-acid polypeptide reads, in one-letter code: Probable endonuclease 4 (278 aa).

Residues H67, H107, E141, D173, H176, H210, D223, H225, and E255 each contribute to the Zn(2+) site.

Belongs to the AP endonuclease 2 family. The cofactor is Zn(2+).

It carries out the reaction Endonucleolytic cleavage to 5'-phosphooligonucleotide end-products.. Its function is as follows. Endonuclease IV plays a role in DNA repair. It cleaves phosphodiester bonds at apurinic or apyrimidinic (AP) sites, generating a 3'-hydroxyl group and a 5'-terminal sugar phosphate. This Natronomonas pharaonis (strain ATCC 35678 / DSM 2160 / CIP 103997 / JCM 8858 / NBRC 14720 / NCIMB 2260 / Gabara) (Halobacterium pharaonis) protein is Probable endonuclease 4.